The chain runs to 765 residues: Glycine--tRNA ligase (765 aa).

Residues 1 to 87 (MSLQLLKALP…LRSAAAEFIM (87 aa)) constitute a mitochondrion transit peptide. The tract at residues 41–73 (TTTKPTPSAPPPPPPTQPQQPAATTSWGTKKQN) is disordered. Over residues 47–58 (PSAPPPPPPTQP) the composition is skewed to pro residues. The region spanning 95-151 (QLAPLRERVQEQGNLVRDLKAKGAPEIDVKKAVAELKARKKLLEDKELALTPSVVSF) is the WHEP-TRS domain. Glu-331 is a glycine binding site. Residues 363-365 (RNE) and 374-375 (RV) contribute to the ATP site. Residue Glu-382 coordinates glycine. Residue 489–490 (EC) participates in ATP binding. Residue 609 to 611 (EPS) participates in glycine binding. Arg-616 is a binding site for ATP.

It belongs to the class-II aminoacyl-tRNA synthetase family. Homodimer.

The protein resides in the mitochondrion. It localises to the cytoplasm. The protein localises to the cell projection. It is found in the axon. It carries out the reaction 2 ATP + H(+) = P(1),P(4)-bis(5'-adenosyl) tetraphosphate + diphosphate. It catalyses the reaction tRNA(Gly) + glycine + ATP = glycyl-tRNA(Gly) + AMP + diphosphate. Functionally, catalyzes the ATP-dependent ligation of glycine to the 3'-end of its cognate tRNA, via the formation of an aminoacyl-adenylate intermediate (Gly-AMP). Also produces diadenosine tetraphosphate (Ap4A), a universal pleiotropic signaling molecule needed for cell regulation pathways, by direct condensation of 2 ATPs. Thereby, may play a special role in Ap4A homeostasis. Required for terminal arborization of both dendrites and axons during development. This Drosophila melanogaster (Fruit fly) protein is Glycine--tRNA ligase.